The following is a 93-amino-acid chain: Large ribosomal subunit protein eL42 (93 aa).

Residues Cys-11, Cys-14, Cys-71, and Cys-74 each contribute to the Zn(2+) site. Residues 11 to 74 (CPYCKKHTSH…IALRLVCDEC (64 aa)) form a C4-type zinc finger.

This sequence belongs to the eukaryotic ribosomal protein eL42 family. As to quaternary structure, part of the 50S ribosomal subunit. Zn(2+) serves as cofactor.

Its function is as follows. Binds to the 23S rRNA. The sequence is that of Large ribosomal subunit protein eL42 from Thermoplasma acidophilum (strain ATCC 25905 / DSM 1728 / JCM 9062 / NBRC 15155 / AMRC-C165).